A 145-amino-acid polypeptide reads, in one-letter code: Arginine repressor (145 aa).

Belongs to the ArgR family.

The protein localises to the cytoplasm. It functions in the pathway amino-acid biosynthesis; L-arginine biosynthesis [regulation]. Regulates arginine biosynthesis genes. The chain is Arginine repressor from Solibacter usitatus (strain Ellin6076).